The sequence spans 426 residues: DNA primase DnaG (426 aa).

One can recognise a Toprim domain in the interval Asp-165 to Pro-241. Glu-171, Asp-215, and Asp-217 together coordinate Mg(2+). A disordered region spans residues Pro-278 to Gln-298. Residues Gln-285 to Val-294 are compositionally biased toward pro residues.

Belongs to the archaeal DnaG primase family. Forms a ternary complex with MCM helicase and DNA. Component of the archaeal exosome complex. Mg(2+) is required as a cofactor.

It catalyses the reaction ssDNA + n NTP = ssDNA/pppN(pN)n-1 hybrid + (n-1) diphosphate.. In terms of biological role, RNA polymerase that catalyzes the synthesis of short RNA molecules used as primers for DNA polymerase during DNA replication. Also part of the exosome, which is a complex involved in RNA degradation. Acts as a poly(A)-binding protein that enhances the interaction between heteromeric, adenine-rich transcripts and the exosome. The chain is DNA primase DnaG from Hyperthermus butylicus (strain DSM 5456 / JCM 9403 / PLM1-5).